Reading from the N-terminus, the 283-residue chain is Thymidylate synthase (283 aa).

R22 serves as a coordination point for dUMP. The active-site Nucleophile is the C160. DUMP contacts are provided by residues 180–183 (RSCD), N191, and 221–223 (HIY). Position 183 (D183) interacts with (6R)-5,10-methylene-5,6,7,8-tetrahydrofolate. S282 lines the (6R)-5,10-methylene-5,6,7,8-tetrahydrofolate pocket.

The protein belongs to the thymidylate synthase family. Bacterial-type ThyA subfamily. As to quaternary structure, homodimer.

It localises to the cytoplasm. The catalysed reaction is dUMP + (6R)-5,10-methylene-5,6,7,8-tetrahydrofolate = 7,8-dihydrofolate + dTMP. It functions in the pathway pyrimidine metabolism; dTTP biosynthesis. Catalyzes the reductive methylation of 2'-deoxyuridine-5'-monophosphate (dUMP) to 2'-deoxythymidine-5'-monophosphate (dTMP) while utilizing 5,10-methylenetetrahydrofolate (mTHF) as the methyl donor and reductant in the reaction, yielding dihydrofolate (DHF) as a by-product. This enzymatic reaction provides an intracellular de novo source of dTMP, an essential precursor for DNA biosynthesis. The chain is Thymidylate synthase from Vibrio atlanticus (strain LGP32) (Vibrio splendidus (strain Mel32)).